Consider the following 1786-residue polypeptide: Protein TIC 214 (1786 aa).

The next 6 helical transmembrane spans lie at 19-39 (IINSVVVVGLYYGFLTTFSIG), 68-88 (FIAGQLMMFISIYYAPLHLAL), 91-111 (PHTITVLALPYLLFHFFWNNH), 133-153 (VFLNNLIFQLFNHFILPSSML), 176-196 (VGWLIGHILFMKWVGLVLVWI), and 227-247 (IFSILLFITCVYYLGRIPSPI). Residues 1007-1046 (SLSEKKIKNLIDRKKTIRNQIEEISKEKQNLTNSCTKLRY) adopt a coiled-coil conformation.

Belongs to the TIC214 family. In terms of assembly, part of the Tic complex. Component of the 1-MD complex, composed of TIC20-I, TIC214, TIC100 and TIC56. Interacts with the translocating preproteins. Hydrolysis of ATP is essential for the formation of this complex. The 1-MD complex interacts with TIC21.

It localises to the plastid. The protein localises to the chloroplast inner membrane. Involved in protein precursor import into chloroplasts. May be part of an intermediate translocation complex acting as a protein-conducting channel at the inner envelope. This is Protein TIC 214 from Arabidopsis thaliana (Mouse-ear cress).